The following is a 275-amino-acid chain: Polyamine aminopropyltransferase (275 aa).

The PABS domain maps to 2–235 (EFWFTEKQTE…GMWTFTIGSK (234 aa)). Residue Gln31 coordinates S-methyl-5'-thioadenosine. Spermidine is bound by residues His62 and Asp86. Residues Asp106 and 137–138 (DG) each bind S-methyl-5'-thioadenosine. The active-site Proton acceptor is Asp155. Spermidine is bound at residue 155–158 (DSTE). Pro162 is a binding site for S-methyl-5'-thioadenosine.

It belongs to the spermidine/spermine synthase family. In terms of assembly, homodimer or homotetramer.

The protein resides in the cytoplasm. The enzyme catalyses S-adenosyl 3-(methylsulfanyl)propylamine + putrescine = S-methyl-5'-thioadenosine + spermidine + H(+). It functions in the pathway amine and polyamine biosynthesis; spermidine biosynthesis; spermidine from putrescine: step 1/1. Its function is as follows. Catalyzes the irreversible transfer of a propylamine group from the amino donor S-adenosylmethioninamine (decarboxy-AdoMet) to putrescine (1,4-diaminobutane) to yield spermidine. The chain is Polyamine aminopropyltransferase from Shouchella clausii (strain KSM-K16) (Alkalihalobacillus clausii).